A 201-amino-acid chain; its full sequence is Molybdenum cofactor guanylyltransferase (201 aa).

GTP-binding positions include 15 to 17 (LAG), Lys-28, Asp-74, and Asp-104. Residue Asp-104 participates in Mg(2+) binding.

The protein belongs to the MobA family. As to quaternary structure, monomer. It depends on Mg(2+) as a cofactor.

It is found in the cytoplasm. It carries out the reaction Mo-molybdopterin + GTP + H(+) = Mo-molybdopterin guanine dinucleotide + diphosphate. Its function is as follows. Transfers a GMP moiety from GTP to Mo-molybdopterin (Mo-MPT) cofactor (Moco or molybdenum cofactor) to form Mo-molybdopterin guanine dinucleotide (Mo-MGD) cofactor. This Pseudomonas syringae pv. tomato (strain ATCC BAA-871 / DC3000) protein is Molybdenum cofactor guanylyltransferase.